We begin with the raw amino-acid sequence, 456 residues long: Bifunctional protein GlmU (456 aa).

Residues 1–229 (MLNNAMSVVI…LSEVEGVNNR (229 aa)) are pyrophosphorylase. UDP-N-acetyl-alpha-D-glucosamine is bound by residues 11-14 (LAAG), Lys25, Gln76, 81-82 (GT), 103-105 (YGD), Gly140, Glu154, Asn169, and Asn227. A Mg(2+)-binding site is contributed by Asp105. Residue Asn227 participates in Mg(2+) binding. The tract at residues 230-250 (LQLSRLERVYQSEQAEKLLLA) is linker. The interval 251–456 (GVMLRDPARF…EGWRRPVKKK (206 aa)) is N-acetyltransferase. Positions 333 and 351 each coordinate UDP-N-acetyl-alpha-D-glucosamine. His363 functions as the Proton acceptor in the catalytic mechanism. 2 residues coordinate UDP-N-acetyl-alpha-D-glucosamine: Tyr366 and Asn377. Residues Ala380, 386–387 (NY), Ser405, Ala423, and Arg440 each bind acetyl-CoA.

It in the N-terminal section; belongs to the N-acetylglucosamine-1-phosphate uridyltransferase family. This sequence in the C-terminal section; belongs to the transferase hexapeptide repeat family. As to quaternary structure, homotrimer. Mg(2+) is required as a cofactor.

It is found in the cytoplasm. The enzyme catalyses alpha-D-glucosamine 1-phosphate + acetyl-CoA = N-acetyl-alpha-D-glucosamine 1-phosphate + CoA + H(+). It catalyses the reaction N-acetyl-alpha-D-glucosamine 1-phosphate + UTP + H(+) = UDP-N-acetyl-alpha-D-glucosamine + diphosphate. Its pathway is nucleotide-sugar biosynthesis; UDP-N-acetyl-alpha-D-glucosamine biosynthesis; N-acetyl-alpha-D-glucosamine 1-phosphate from alpha-D-glucosamine 6-phosphate (route II): step 2/2. It functions in the pathway nucleotide-sugar biosynthesis; UDP-N-acetyl-alpha-D-glucosamine biosynthesis; UDP-N-acetyl-alpha-D-glucosamine from N-acetyl-alpha-D-glucosamine 1-phosphate: step 1/1. The protein operates within bacterial outer membrane biogenesis; LPS lipid A biosynthesis. Catalyzes the last two sequential reactions in the de novo biosynthetic pathway for UDP-N-acetylglucosamine (UDP-GlcNAc). The C-terminal domain catalyzes the transfer of acetyl group from acetyl coenzyme A to glucosamine-1-phosphate (GlcN-1-P) to produce N-acetylglucosamine-1-phosphate (GlcNAc-1-P), which is converted into UDP-GlcNAc by the transfer of uridine 5-monophosphate (from uridine 5-triphosphate), a reaction catalyzed by the N-terminal domain. The polypeptide is Bifunctional protein GlmU (Escherichia coli O157:H7 (strain EC4115 / EHEC)).